The primary structure comprises 229 residues: Protein rep (229 aa).

Tyrosine 214 contributes to the DNA binding site.

It belongs to the Gram-positive plasmids replication protein type 1 family.

In terms of biological role, produces a single-strand nick in a specific site of the plasmid, and this nick results in single-strand replication by rolling circle mechanism. The sequence is that of Protein rep from Staphylococcus aureus.